Here is a 233-residue protein sequence, read N- to C-terminus: Large ribosomal subunit protein uL1 (233 aa).

Belongs to the universal ribosomal protein uL1 family. As to quaternary structure, part of the 50S ribosomal subunit.

Its function is as follows. Binds directly to 23S rRNA. The L1 stalk is quite mobile in the ribosome, and is involved in E site tRNA release. Functionally, protein L1 is also a translational repressor protein, it controls the translation of the L11 operon by binding to its mRNA. The sequence is that of Large ribosomal subunit protein uL1 from Aeromonas salmonicida (strain A449).